Consider the following 409-residue polypeptide: Shaggy-related protein kinase gamma (409 aa).

At alanine 2 the chain carries N-acetylalanine. The Protein kinase domain maps to tyrosine 73–phenylalanine 357. ATP is bound by residues valine 79–valine 87 and lysine 102. The active-site Proton acceptor is aspartate 198. At tyrosine 233 the chain carries Phosphotyrosine.

The protein belongs to the protein kinase superfamily. CMGC Ser/Thr protein kinase family. GSK-3 subfamily. In terms of assembly, binds to KIB1. Component of a complex made of POLAR, BASL, ASK7/BIN2 and ASK3/SK12. Binds to POLAR and BASL. Post-translationally, autophosphorylated mainly on threonine and serine residues. In terms of tissue distribution, roots, shoots and leaves.

It localises to the cytoplasm. The protein resides in the cell cortex. The catalysed reaction is L-seryl-[protein] + ATP = O-phospho-L-seryl-[protein] + ADP + H(+). It carries out the reaction L-threonyl-[protein] + ATP = O-phospho-L-threonyl-[protein] + ADP + H(+). Its function is as follows. May mediate extracellular signals to regulate transcription in differentiating cells. Probably involved first at the cortical polarity site, to restrict MAPK signaling and promote asymmetric cell division (ACD), and second in the nucleus of stomatal lineage ground cells (SLGCs) or meristemoids, to limit cell division and to promote differentiation into pavement or stomatal guard cells, respectively. Phosphorylate YDA and SPCH in vitro. This chain is Shaggy-related protein kinase gamma, found in Arabidopsis thaliana (Mouse-ear cress).